A 97-amino-acid polypeptide reads, in one-letter code: Aspartyl/glutamyl-tRNA(Asn/Gln) amidotransferase subunit C (97 aa).

The protein belongs to the GatC family. As to quaternary structure, heterotrimer of A, B and C subunits.

The enzyme catalyses L-glutamyl-tRNA(Gln) + L-glutamine + ATP + H2O = L-glutaminyl-tRNA(Gln) + L-glutamate + ADP + phosphate + H(+). It catalyses the reaction L-aspartyl-tRNA(Asn) + L-glutamine + ATP + H2O = L-asparaginyl-tRNA(Asn) + L-glutamate + ADP + phosphate + 2 H(+). Functionally, allows the formation of correctly charged Asn-tRNA(Asn) or Gln-tRNA(Gln) through the transamidation of misacylated Asp-tRNA(Asn) or Glu-tRNA(Gln) in organisms which lack either or both of asparaginyl-tRNA or glutaminyl-tRNA synthetases. The reaction takes place in the presence of glutamine and ATP through an activated phospho-Asp-tRNA(Asn) or phospho-Glu-tRNA(Gln). This chain is Aspartyl/glutamyl-tRNA(Asn/Gln) amidotransferase subunit C, found in Nostoc punctiforme (strain ATCC 29133 / PCC 73102).